The following is a 299-amino-acid chain: Tyrosine recombinase XerC (299 aa).

The Core-binding (CB) domain maps to 1 to 85 (MERQLDAYCE…AVRGLYHYLN (85 aa)). The Tyr recombinase domain maps to 106 to 285 (RLPKTLDTDR…DFQHLAAVYD (180 aa)). Active-site residues include Arg-146, Lys-170, His-237, Arg-240, and His-263. The active-site O-(3'-phospho-DNA)-tyrosine intermediate is Tyr-272.

It belongs to the 'phage' integrase family. XerC subfamily. In terms of assembly, forms a cyclic heterotetrameric complex composed of two molecules of XerC and two molecules of XerD.

It localises to the cytoplasm. Its function is as follows. Site-specific tyrosine recombinase, which acts by catalyzing the cutting and rejoining of the recombining DNA molecules. The XerC-XerD complex is essential to convert dimers of the bacterial chromosome into monomers to permit their segregation at cell division. It also contributes to the segregational stability of plasmids. The sequence is that of Tyrosine recombinase XerC from Pseudomonas fluorescens (strain Pf0-1).